Reading from the N-terminus, the 482-residue chain is Membrane-bound lytic murein transglycosylase F (482 aa).

A signal peptide spans 1–18 (MKGLFLRIITALALLFWA). The interval 19-267 (IDMVFPWQFL…NLKEKYLGHI (249 aa)) is non-LT domain. The segment at 268-482 (SQFDYVDTRS…NLEEIKENED (215 aa)) is LT domain. The active site involves Glu-312. Residues 457-470 (ENQTTNDNANNESA) show a composition bias toward polar residues. Residues 457–482 (ENQTTNDNANNESAVKNLEEIKENED) form a disordered region. Basic and acidic residues predominate over residues 473 to 482 (NLEEIKENED).

The protein in the N-terminal section; belongs to the bacterial solute-binding protein 3 family. It in the C-terminal section; belongs to the transglycosylase Slt family.

The protein resides in the cell outer membrane. It catalyses the reaction Exolytic cleavage of the (1-&gt;4)-beta-glycosidic linkage between N-acetylmuramic acid (MurNAc) and N-acetylglucosamine (GlcNAc) residues in peptidoglycan, from either the reducing or the non-reducing ends of the peptidoglycan chains, with concomitant formation of a 1,6-anhydrobond in the MurNAc residue.. Functionally, murein-degrading enzyme that degrades murein glycan strands and insoluble, high-molecular weight murein sacculi, with the concomitant formation of a 1,6-anhydromuramoyl product. Lytic transglycosylases (LTs) play an integral role in the metabolism of the peptidoglycan (PG) sacculus. Their lytic action creates space within the PG sacculus to allow for its expansion as well as for the insertion of various structures such as secretion systems and flagella. The protein is Membrane-bound lytic murein transglycosylase F of Haemophilus influenzae (strain PittGG).